Consider the following 1238-residue polypeptide: Inner capsid protein VP2 (1238 aa).

Residues 1-35 (MSTSAKKTPESKTEDKIEPVIEQTSNDKPEPPPNK) are disordered. Basic and acidic residues predominate over residues 7–30 (KTPESKTEDKIEPVIEQTSNDKPE).

This sequence belongs to the turreted BTV-fold inner capsid family. Homodecamer; each decamer is made up of two conformers of VP2, called VP2A and VP2B. 12 homodecamers assemble to form an icosahedral capsid.

The protein localises to the virion. In terms of biological role, inner capsid protein that self-assembles to form an icosahedral capsid with a T=2 symmetry, which consists of 120 copies of VP2, with channels at each of its five-fold vertices. This capsid constitutes the innermost concentric layer of the viral mature particle. The chain is Inner capsid protein VP2 (S2) from Cryphonectria parasitica (Chestnut blight fungus).